Consider the following 104-residue polypeptide: Protein S100-A14 (104 aa).

In terms of domain architecture, EF-hand spans 27-61; the sequence is KNFHQYSVEGGKETLTPSELRDLVTQQLPHLMPSN.

The protein belongs to the S-100 family. As to quaternary structure, homodimer. Interacts with AGER. In terms of tissue distribution, expressed at highest levels in colon and at moderate levels in thymus, kidney, liver, small intestine, and lung. Low expression in heart and no expression is seen in brain, skeletal muscle, spleen, placenta and peripheral blood leukocytes.

The protein localises to the cytoplasm. Functionally, modulates P53/TP53 protein levels, and thereby plays a role in the regulation of cell survival and apoptosis. Depending on the context, it can promote cell proliferation or apoptosis. Plays a role in the regulation of cell migration by modulating the levels of MMP2, a matrix protease that is under transcriptional control of P53/TP53. Does not bind calcium. The protein is Protein S100-A14 (S100A14) of Homo sapiens (Human).